We begin with the raw amino-acid sequence, 1704 residues long: Vitellogenin-1 (1704 aa).

The N-terminal stretch at M1 to A14 is a signal peptide. The Vitellogenin domain occupies F22–F660. Residues N446, N635, N903, N908, N1019, N1054, N1080, N1121, N1174, N1285, N1322, N1375, N1379, N1405, N1456, and N1512 are each glycosylated (N-linked (GlcNAc...) asparagine). A compositionally biased stretch (low complexity) spans R1078–R1109. Residues R1078–M1213 form a disordered region. Residues S1122–S1204 are compositionally biased toward low complexity. Residues A1442–R1617 enclose the VWFD domain. Cystine bridges form between C1444–C1580 and C1467–C1616.

Post-translationally, phosvitin, an egg yolk storage protein, is one of the most highly phosphorylated (10%) proteins in nature. In terms of processing, the N-terminal of the blood vitellogenin is blocked. In terms of tissue distribution, produced by the liver, secreted into the blood and then sequestered by receptor mediated endocytosis into growing oocytes, where it is generally cleaved, giving rise to the respective yolk components composed of complex suite of small cleavage products.

Functionally, precursor of the major egg-yolk proteins that are sources of nutrients during early development of oviparous organisms. The polypeptide is Vitellogenin-1 (vtg1) (Fundulus heteroclitus (Killifish)).